Consider the following 439-residue polypeptide: Thymidine phosphorylase (439 aa).

This sequence belongs to the thymidine/pyrimidine-nucleoside phosphorylase family. Homodimer.

It catalyses the reaction thymidine + phosphate = 2-deoxy-alpha-D-ribose 1-phosphate + thymine. Its pathway is pyrimidine metabolism; dTMP biosynthesis via salvage pathway; dTMP from thymine: step 1/2. The enzymes which catalyze the reversible phosphorolysis of pyrimidine nucleosides are involved in the degradation of these compounds and in their utilization as carbon and energy sources, or in the rescue of pyrimidine bases for nucleotide synthesis. In Mesorhizobium japonicum (strain LMG 29417 / CECT 9101 / MAFF 303099) (Mesorhizobium loti (strain MAFF 303099)), this protein is Thymidine phosphorylase.